The chain runs to 293 residues: tRNA pseudouridine synthase B (293 aa).

Catalysis depends on Asp-39, which acts as the Nucleophile.

Belongs to the pseudouridine synthase TruB family. Type 1 subfamily.

It catalyses the reaction uridine(55) in tRNA = pseudouridine(55) in tRNA. Responsible for synthesis of pseudouridine from uracil-55 in the psi GC loop of transfer RNAs. This is tRNA pseudouridine synthase B from Rickettsia bellii (strain RML369-C).